The sequence spans 437 residues: MTHYHFVGIKGSGMSSLAQIMHDLGHEVQGSDIENYVFTEVALRNKGIKILPFDANNIKEDMVVIQGNAFASSHEEKARAHQMKLDVVSYNDFLGQIIDQYTSVAVTGAHGKTSTTGLLSHVMNGDKKTSFLIGDGTGMGLPESDYFAFEACEYRRHFLSYKPDYAIMTNIDFDHPDYFKDINDVFDAFQEMAHNVKKGIIAWGDDEHLRKIEADVPIYYYGFKDSDDIYAQNIQITDKGTAFDVYVDGEFYDHFLSPQYGDHTVLNALAVIAISYLEKLDVTNIKEALETFGGVKRRFNETTIANQVIVDDYAHHPREISATIETARKKYPHKEVVAVFQPHTFSRTQAFLNEFAESLSKADRVFLCEIFGSIRENTGALTIQDLIDKIEGASLINEDSINVLEQFDNAVVLFKGAGDIQKLQNAYLDKLGMKNAF.

108-114 (GAHGKTS) serves as a coordination point for ATP.

It belongs to the MurCDEF family.

It localises to the cytoplasm. The enzyme catalyses UDP-N-acetyl-alpha-D-muramate + L-alanine + ATP = UDP-N-acetyl-alpha-D-muramoyl-L-alanine + ADP + phosphate + H(+). It functions in the pathway cell wall biogenesis; peptidoglycan biosynthesis. Cell wall formation. The protein is UDP-N-acetylmuramate--L-alanine ligase of Staphylococcus aureus.